The primary structure comprises 344 residues: Dihydroorotase (344 aa).

Zn(2+) contacts are provided by His13 and His15. Residues 15–17 and Asn41 each bind substrate; that span reads HLR. Residues Lys98, His135, and His173 each contribute to the Zn(2+) site. An N6-carboxylysine modification is found at Lys98. His135 lines the substrate pocket. A substrate-binding site is contributed by Leu218. Zn(2+) is bound at residue Asp247. Asp247 is an active-site residue. Substrate contacts are provided by His251 and Ala263.

The protein belongs to the metallo-dependent hydrolases superfamily. DHOase family. Class II DHOase subfamily. In terms of assembly, homodimer. Zn(2+) is required as a cofactor.

It catalyses the reaction (S)-dihydroorotate + H2O = N-carbamoyl-L-aspartate + H(+). The protein operates within pyrimidine metabolism; UMP biosynthesis via de novo pathway; (S)-dihydroorotate from bicarbonate: step 3/3. Its function is as follows. Catalyzes the reversible cyclization of carbamoyl aspartate to dihydroorotate. This Neisseria meningitidis serogroup B (strain ATCC BAA-335 / MC58) protein is Dihydroorotase.